The following is a 279-amino-acid chain: Ribonuclease Z (279 aa).

Zn(2+) is bound by residues His-61, His-63, Asp-65, His-66, His-153, Asp-176, and His-240. Asp-65 functions as the Proton acceptor in the catalytic mechanism.

Belongs to the RNase Z family. In terms of assembly, homodimer. Zn(2+) serves as cofactor.

It catalyses the reaction Endonucleolytic cleavage of RNA, removing extra 3' nucleotides from tRNA precursor, generating 3' termini of tRNAs. A 3'-hydroxy group is left at the tRNA terminus and a 5'-phosphoryl group is left at the trailer molecule.. In terms of biological role, zinc phosphodiesterase, which displays some tRNA 3'-processing endonuclease activity. Probably involved in tRNA maturation, by removing a 3'-trailer from precursor tRNA. This is Ribonuclease Z from Mycobacterium marinum (strain ATCC BAA-535 / M).